A 248-amino-acid chain; its full sequence is 14-3-3 protein gamma-2 (248 aa).

Belongs to the 14-3-3 family. As to quaternary structure, homodimer, and heterodimer with other family members. Expressed in brain, gill, heart, intestine, kidney, liver, ovary, skeletal muscle, spleen and testis.

It localises to the cytoplasm. In terms of biological role, adapter protein implicated in the regulation of a large spectrum of both general and specialized signaling pathways. Binds to a large number of partners, usually by recognition of a phosphoserine or phosphothreonine motif. Binding generally results in the modulation of the activity of the binding partner. The sequence is that of 14-3-3 protein gamma-2 from Oncorhynchus mykiss (Rainbow trout).